Consider the following 455-residue polypeptide: Neuronal acetylcholine receptor subunit beta-3 (455 aa).

The N-terminal stretch at 1–20 (MLCLMLCVLCWSRSDVAALG) is a signal peptide. Topologically, residues 21–229 (SVVENEDALL…VTYSFVLRRL (209 aa)) are extracellular. N-linked (GlcNAc...) asparagine glycans are attached at residues asparagine 48 and asparagine 163. Cysteine 150 and cysteine 164 are joined by a disulfide. Helical transmembrane passes span 230–254 (PLFY…VFYL), 262–279 (LSLS…LLVI), and 296–317 (YLLF…VINV). Residues 318-425 (HHRSSATYHP…WKFVAQVLDR (108 aa)) lie on the Cytoplasmic side of the membrane. A helical transmembrane segment spans residues 426-444 (IFLWLFLVVSVTGSVLIFT).

Belongs to the ligand-gated ion channel (TC 1.A.9) family. Acetylcholine receptor (TC 1.A.9.1) subfamily. Beta-3/CHRNB3 sub-subfamily. As to quaternary structure, neuronal AChR seems to be composed of two different type of subunits: alpha and beta. CHRNB3/beta-3 subunit is only able to form functional nAChRs when co-assembled with another beta subunit. Participates in pentameric assemblies along with CHRNA4/alpha-4 and CHRNB2/beta-2 subunits and with CHRNA6/alpha-6 as well, forming stoichiometries such as (CHRNA3:CHRNB4)2:CHRNB3, (CHRNA4:CHRNB2)2:CHRNB3 or (CHRNA6:CHRNB2)2:CHRNB3. As to expression, relatively abundant in the developing retina and in the trigeminal ganglion.

The protein localises to the synaptic cell membrane. Its subcellular location is the cell membrane. It catalyses the reaction Ca(2+)(in) = Ca(2+)(out). It carries out the reaction K(+)(in) = K(+)(out). The catalysed reaction is Na(+)(in) = Na(+)(out). With respect to regulation, activated by a myriad of ligands such as acetylcholine, cytisine, nicotine, choline and epibatidine. Component of neuronal acetylcholine receptors (nAChRs) that function as pentameric, ligand-gated cation channels with high calcium permeability among other activities. nAChRs are excitatory neurotrasnmitter receptors formed by a collection of nAChR subunits known to mediate synaptic transmission in the nervous system and the neuromuscular junction. Each nAchR subunit confers differential attributes to channel properties, including activation, deactivation and desensitization kinetics, pH sensitivity, cation permeability, and binding to allosteric modulators. Has an accessory rather than functional role and is only able to form functional nAChRs when co-assembled with another beta subunit. Participates in pentameric assemblies along with CHRNA3, CHRNA4, CHRNA6, CHRNB2 and CHRNB4. Modulates receptor assembly and increases receptor sensitivity to nicotine when associated with CHRNB2, CHRNA4 and/or CHRNA6 as well as CHRNA3 and CHRNB4. Seems to play a role in nicotine addiction. The chain is Neuronal acetylcholine receptor subunit beta-3 (CHRNB3) from Gallus gallus (Chicken).